Here is a 231-residue protein sequence, read N- to C-terminus: Isoprenyl transferase (231 aa).

The active site involves aspartate 14. Aspartate 14 is a binding site for Mg(2+). Residues 15 to 18, tryptophan 19, arginine 27, histidine 31, and 59 to 61 contribute to the substrate site; these read GNGR and STE. The active-site Proton acceptor is asparagine 62. Substrate contacts are provided by residues tryptophan 63, arginine 65, arginine 176, and 182-184; that span reads RIS. Glutamate 195 is a binding site for Mg(2+).

It belongs to the UPP synthase family. Homodimer. Mg(2+) is required as a cofactor.

Its function is as follows. Catalyzes the condensation of isopentenyl diphosphate (IPP) with allylic pyrophosphates generating different type of terpenoids. The chain is Isoprenyl transferase from Aquifex pyrophilus.